The sequence spans 262 residues: Acyl-[acyl-carrier-protein]--UDP-N-acetylglucosamine O-acyltransferase (262 aa).

Belongs to the transferase hexapeptide repeat family. LpxA subfamily. Homotrimer.

It is found in the cytoplasm. It catalyses the reaction a (3R)-hydroxyacyl-[ACP] + UDP-N-acetyl-alpha-D-glucosamine = a UDP-3-O-[(3R)-3-hydroxyacyl]-N-acetyl-alpha-D-glucosamine + holo-[ACP]. It functions in the pathway glycolipid biosynthesis; lipid IV(A) biosynthesis; lipid IV(A) from (3R)-3-hydroxytetradecanoyl-[acyl-carrier-protein] and UDP-N-acetyl-alpha-D-glucosamine: step 1/6. In terms of biological role, involved in the biosynthesis of lipid A, a phosphorylated glycolipid that anchors the lipopolysaccharide to the outer membrane of the cell. This is Acyl-[acyl-carrier-protein]--UDP-N-acetylglucosamine O-acyltransferase from Yersinia pseudotuberculosis serotype O:1b (strain IP 31758).